Reading from the N-terminus, the 508-residue chain is Hydroxymethylglutaryl-CoA synthase, mitochondrial (508 aa).

The N-terminal 37 residues, 1 to 37, are a transit peptide targeting the mitochondrion; it reads MQRLLTPVRQVLQVKRVMQEASLLPARLLPAAHPSFS. Lysine 52 carries the N6-succinyllysine modification. (3S)-3-hydroxy-3-methylglutaryl-CoA is bound by residues glutamate 80 and alanine 81. Glutamate 132 acts as the Proton donor/acceptor in catalysis. Residues cysteine 166, asparagine 204, and threonine 208 each contribute to the (3S)-3-hydroxy-3-methylglutaryl-CoA site. Cysteine 166 functions as the Acyl-thioester intermediate in the catalytic mechanism. An N6-acetyllysine modification is found at lysine 243. Residue lysine 256 is modified to N6-acetyllysine; alternate. Position 256 is an N6-succinyllysine; alternate (lysine 256). Serine 258 and histidine 301 together coordinate (3S)-3-hydroxy-3-methylglutaryl-CoA. The Proton donor/acceptor role is filled by histidine 301. Lysine 306 carries the post-translational modification N6-acetyllysine. Lysine 310 contacts (3S)-3-hydroxy-3-methylglutaryl-CoA. Lysine 310 carries the post-translational modification N6-acetyllysine; alternate. Lysine 310 bears the N6-succinyllysine; alternate mark. Lysine 333 is modified (N6-succinyllysine). 4 positions are modified to N6-acetyllysine; alternate: lysine 342, lysine 350, lysine 354, and lysine 358. Residues lysine 342, lysine 350, lysine 354, and lysine 358 each carry the N6-succinyllysine; alternate modification. Residues asparagine 380 and serine 414 each coordinate (3S)-3-hydroxy-3-methylglutaryl-CoA. Serine 433 is modified (phosphoserine). Lysine 437 carries the post-translational modification N6-acetyllysine. Serine 440 carries the phosphoserine modification. Position 447 is an N6-acetyllysine; alternate (lysine 447). Lysine 447 carries the post-translational modification N6-succinyllysine; alternate. Serine 456 bears the Phosphoserine mark. Position 473 is an N6-acetyllysine; alternate (lysine 473). At lysine 473 the chain carries N6-succinyllysine; alternate. Serine 477 carries the post-translational modification Phosphoserine.

Belongs to the thiolase-like superfamily. HMG-CoA synthase family. Homodimer. Post-translationally, succinylated. Desuccinylated by SIRT5. Succinylation, at least at Lys-310, inhibits the enzymatic activity.

It localises to the mitochondrion. It carries out the reaction acetoacetyl-CoA + acetyl-CoA + H2O = (3S)-3-hydroxy-3-methylglutaryl-CoA + CoA + H(+). It functions in the pathway metabolic intermediate biosynthesis; (R)-mevalonate biosynthesis; (R)-mevalonate from acetyl-CoA: step 2/3. Its function is as follows. Catalyzes the first irreversible step in ketogenesis, condensing acetyl-CoA to acetoacetyl-CoA to form HMG-CoA, which is converted by HMG-CoA reductase (HMGCR) into mevalonate. The protein is Hydroxymethylglutaryl-CoA synthase, mitochondrial (HMGCS2) of Bos taurus (Bovine).